Here is a 303-residue protein sequence, read N- to C-terminus: Ribonuclease Z (303 aa).

The Zn(2+) site is built by His61, His63, Asp65, His66, His139, Asp207, and His266. Asp65 acts as the Proton acceptor in catalysis.

It belongs to the RNase Z family. As to quaternary structure, homodimer. The cofactor is Zn(2+).

It carries out the reaction Endonucleolytic cleavage of RNA, removing extra 3' nucleotides from tRNA precursor, generating 3' termini of tRNAs. A 3'-hydroxy group is left at the tRNA terminus and a 5'-phosphoryl group is left at the trailer molecule.. In terms of biological role, zinc phosphodiesterase, which displays some tRNA 3'-processing endonuclease activity. Probably involved in tRNA maturation, by removing a 3'-trailer from precursor tRNA. In Clostridium kluyveri (strain ATCC 8527 / DSM 555 / NBRC 12016 / NCIMB 10680 / K1), this protein is Ribonuclease Z.